The chain runs to 141 residues: Acetyltransferase YpeA (141 aa).

The region spanning 1–141 is the N-acetyltransferase domain; sequence MEIRVFRQED…GKRLIEDEEY (141 aa).

The protein belongs to the acetyltransferase family. YpeA subfamily.

The sequence is that of Acetyltransferase YpeA from Shigella boydii serotype 4 (strain Sb227).